Consider the following 217-residue polypeptide: GRB2-related adapter protein (217 aa).

In terms of domain architecture, SH3 1 spans 1–58; it reads MESVALYSFQATESDELAFNKGDTLKILNMEDDQNWYKAELRGAEGFVPKNYIRVKPH. In terms of domain architecture, SH2 spans 60 to 152; that stretch reads WYSGRISRQL…RRQIFLCDEQ (93 aa). The region spanning 158–217 is the SH3 2 domain; the sequence is SRACFAQAQFDFSAQDPSQLSLRRGDIVEVVEREDPHWWRGRAGGRLGFFPRSYVQPVHL.

It belongs to the GRB2/sem-5/DRK family. Associates through its SH2 domain with ligand-activated receptors for stem cell factor (KIT) and erythropoietin (EPOR). Also forms a stable complex with the Bcr-Abl oncoprotein. GRAP is associated with the Ras guanine nucleotide exchange factor SOS1, primarily through its N-terminal SH3 domain. Interacts with phosphorylated LAT upon TCR activation. Interacts with SHB. As to expression, expressed in inner ear, in neruonal fibers innervating cochlear and utricular auditory hair cells (at protein level).

The protein resides in the membrane. The protein localises to the synapse. In terms of biological role, couples signals from receptor and cytoplasmic tyrosine kinases to the Ras signaling pathway. Plays a role in the inner ear and in hearing. The chain is GRB2-related adapter protein from Mus musculus (Mouse).